The primary structure comprises 498 residues: Isocitrate dehydrogenase [NADP], mitochondrial (498 aa).

NADP(+)-binding positions include 164 to 166 and Arg-171; that span reads TIT. Residue Thr-166 participates in substrate binding. Substrate is bound by residues 183–189, Arg-198, and Arg-221; that span reads SPNGTIR. A Mn(2+)-binding site is contributed by Asp-339. Lys-347 contributes to the NADP(+) binding site. Asp-362 is a binding site for Mn(2+). Residues 397 to 402 and Asn-415 each bind NADP(+); that span reads GTVTRH.

Belongs to the isocitrate and isopropylmalate dehydrogenases family. Mg(2+) serves as cofactor. The cofactor is Mn(2+).

It is found in the mitochondrion. The enzyme catalyses D-threo-isocitrate + NADP(+) = 2-oxoglutarate + CO2 + NADPH. The sequence is that of Isocitrate dehydrogenase [NADP], mitochondrial (icdA) from Aspergillus niger.